The primary structure comprises 779 residues: Endonuclease MutS2 (779 aa).

328-335 lines the ATP pocket; it reads GPNTGGKT. A Smr domain is found at 704 to 779; sequence LDLRGKRYEE…GSGATIVTLG (76 aa).

The protein belongs to the DNA mismatch repair MutS family. MutS2 subfamily. In terms of assembly, homodimer. Binds to stalled ribosomes, contacting rRNA.

In terms of biological role, endonuclease that is involved in the suppression of homologous recombination and thus may have a key role in the control of bacterial genetic diversity. Functionally, acts as a ribosome collision sensor, splitting the ribosome into its 2 subunits. Detects stalled/collided 70S ribosomes which it binds and splits by an ATP-hydrolysis driven conformational change. Acts upstream of the ribosome quality control system (RQC), a ribosome-associated complex that mediates the extraction of incompletely synthesized nascent chains from stalled ribosomes and their subsequent degradation. Probably generates substrates for RQC. The protein is Endonuclease MutS2 of Streptococcus agalactiae serotype Ia (strain ATCC 27591 / A909 / CDC SS700).